We begin with the raw amino-acid sequence, 237 residues long: E3 ubiquitin-protein ligase RNF166 (237 aa).

The segment at cysteine 33–arginine 73 adopts an RING-type zinc-finger fold. Zn(2+) contacts are provided by cysteine 98, cysteine 101, histidine 113, and cysteine 117. The C2HC RNF-type zinc finger occupies cysteine 98–cysteine 117. The UIM domain occupies aspartate 221–asparagine 237.

It is found in the cytoplasm. The catalysed reaction is S-ubiquitinyl-[E2 ubiquitin-conjugating enzyme]-L-cysteine + [acceptor protein]-L-lysine = [E2 ubiquitin-conjugating enzyme]-L-cysteine + N(6)-ubiquitinyl-[acceptor protein]-L-lysine.. It participates in protein modification; protein ubiquitination. Functionally, E3 ubiquitin-protein ligase that promotes the ubiquitination of different substrates. In turn, participates in different biological processes including interferon production or autophagy. Plays a role in the activation of RNA virus-induced interferon-beta production by promoting the ubiquitination of TRAF3 and TRAF6. Also plays a role in the early recruitment of autophagy adapters to bacteria. Mediates 'Lys-29' and 'Lys-33'-linked ubiquitination of SQSTM1 leading to xenophagic targeting of bacteria and inhibition of their replication. In Mus musculus (Mouse), this protein is E3 ubiquitin-protein ligase RNF166 (Rnf166).